The sequence spans 414 residues: 2,3-diketo-5-methylthiopentyl-1-phosphate enolase (414 aa).

Catalysis depends on lysine 99, which acts as the Proton acceptor. Residues lysine 148, 174–177 (KDDE), histidine 265, glycine 338, and 360–361 (GG) contribute to the substrate site. Residues lysine 174, aspartate 176, and glutamate 177 each coordinate Mg(2+). N6-carboxylysine is present on lysine 174.

The protein belongs to the RuBisCO large chain family. Type IV subfamily. As to quaternary structure, homodimer. Mg(2+) is required as a cofactor.

The catalysed reaction is 5-methylsulfanyl-2,3-dioxopentyl phosphate = 2-hydroxy-5-methylsulfanyl-3-oxopent-1-enyl phosphate. The protein operates within amino-acid biosynthesis; L-methionine biosynthesis via salvage pathway; L-methionine from S-methyl-5-thio-alpha-D-ribose 1-phosphate: step 3/6. In terms of biological role, catalyzes the enolization of 2,3-diketo-5-methylthiopentyl-1-phosphate (DK-MTP-1-P) into 2-hydroxy-3-keto-5-methylthiopentenyl-1-phosphate (HK-MTPenyl-1-P). This Bacillus cytotoxicus (strain DSM 22905 / CIP 110041 / 391-98 / NVH 391-98) protein is 2,3-diketo-5-methylthiopentyl-1-phosphate enolase.